The sequence spans 474 residues: MAFSHIEGLYFYNTASQKKELFFPNHTPVRLYTCGPTVYDYAHIGNFRTYVFEDILKRTLVFFGYSVTHVMNITDVEDKTIAGASKKNIPLQEYTQPYTEAFFEDLDTLNIARADFYPHATHYIPQMIQAITKLLEQGIAYIGQDASVYFSLNRFPNYGKLSHLDLSSLRCCSRISADEYDKENPSDFVLWKAYNPERDGVIYWESPFGKGRPGWHLECSIMAMELLGDSLDIHAGGVDNIFPHHENEIAQSEALSGKPFARYWLHSEHLLIDGKKMSKSLGNFLTLRDLLHQEFTGQEVRYMLLQSHYRTQLNFTEEALLACRHALRRLKDFVSRLEGVDLPGESPLPRTLDSSSQFIEAFSRALANDLNVSTGFASLFDFVHEINTLIDQGHFSKADSLYILDTLKKVDTVLGVLPLTTSVCIPETVMQLVAEREEARKTKNWAMADTLRDEILAAGFLVEDSKSGPKVKPL.

Zn(2+) is bound at residue Cys-34. The 'HIGH' region motif lies at 36–46 (PTVYDYAHIGN). Zn(2+) contacts are provided by Cys-219, His-244, and Glu-248. The 'KMSKS' region motif lies at 276-280 (KMSKS). Lys-279 serves as a coordination point for ATP.

Belongs to the class-I aminoacyl-tRNA synthetase family. As to quaternary structure, monomer. It depends on Zn(2+) as a cofactor.

The protein resides in the cytoplasm. The catalysed reaction is tRNA(Cys) + L-cysteine + ATP = L-cysteinyl-tRNA(Cys) + AMP + diphosphate. The protein is Cysteine--tRNA ligase (cysS) of Chlamydia pneumoniae (Chlamydophila pneumoniae).